A 90-amino-acid polypeptide reads, in one-letter code: UPF0335 protein RPA4190 (90 aa).

The protein belongs to the UPF0335 family.

This is UPF0335 protein RPA4190 from Rhodopseudomonas palustris (strain ATCC BAA-98 / CGA009).